A 205-amino-acid chain; its full sequence is Coenzyme Q-binding protein COQ10, mitochondrial (205 aa).

This sequence belongs to the COQ10 family. Interacts with coenzyme Q.

The protein localises to the mitochondrion inner membrane. Required for the function of coenzyme Q in the respiratory chain. May serve as a chaperone or may be involved in the transport of Q6 from its site of synthesis to the catalytic sites of the respiratory complexes. This Dictyostelium discoideum (Social amoeba) protein is Coenzyme Q-binding protein COQ10, mitochondrial (coq10-1).